Here is a 59-residue protein sequence, read N- to C-terminus: Large ribosomal subunit protein uL30 (59 aa).

This sequence belongs to the universal ribosomal protein uL30 family. In terms of assembly, part of the 50S ribosomal subunit.

In Psychrobacter arcticus (strain DSM 17307 / VKM B-2377 / 273-4), this protein is Large ribosomal subunit protein uL30.